Consider the following 813-residue polypeptide: Protein SBE22 (813 aa).

Disordered regions lie at residues 1–66 (MIRP…HGHA), 107–240 (EIFS…GEFG), and 331–359 (QKDSATNSSSTITERITPGENQSQNNRES). Residues 56-66 (RPSDNLFHGHA) show a composition bias toward basic and acidic residues. A compositionally biased stretch (low complexity) spans 107-121 (EIFSTSSSDTQSNIS). A compositionally biased stretch (basic and acidic residues) spans 127 to 138 (SEDHSFGMDKSV). Composition is skewed to polar residues over residues 139-160 (DNSSTNATLTNRSIENRSNGDS), 169-200 (VSVNRSTKSGNNPLQRTQSETISVNMSHNRSM), and 214-234 (KNSSIPNLRYNSQPQQDNRSV).

Belongs to the SBE2 family.

It localises to the cytoplasm. The protein resides in the golgi apparatus. In terms of biological role, with SBE2, is involved in cell wall integrity and polarity processes like bud growth. This chain is Protein SBE22 (SBE22), found in Candida glabrata (strain ATCC 2001 / BCRC 20586 / JCM 3761 / NBRC 0622 / NRRL Y-65 / CBS 138) (Yeast).